The sequence spans 215 residues: Adenylyl-sulfate kinase (215 aa).

Position 46 to 53 (46 to 53) interacts with ATP; the sequence is GLSGAGKS. The Phosphoserine intermediate role is filled by S120.

It belongs to the APS kinase family.

The enzyme catalyses adenosine 5'-phosphosulfate + ATP = 3'-phosphoadenylyl sulfate + ADP + H(+). It functions in the pathway sulfur metabolism; hydrogen sulfide biosynthesis; sulfite from sulfate: step 2/3. Functionally, catalyzes the synthesis of activated sulfate. This Vibrio cholerae serotype O1 (strain ATCC 39315 / El Tor Inaba N16961) protein is Adenylyl-sulfate kinase (cysC).